A 37-amino-acid chain; its full sequence is Bacteriocin lactococcin MMFII (37 aa).

The cysteines at positions 9 and 14 are disulfide-linked.

The protein localises to the secreted. Bacteriocin active against Listeria monocytogenes and Lactococcus cremoris. The chain is Bacteriocin lactococcin MMFII from Lactococcus lactis subsp. lactis (Streptococcus lactis).